The following is a 1320-amino-acid chain: Protein brunelleschi (1320 aa).

The tract at residues 313–411 is disordered; the sequence is HRNSSLQEAG…IPGHQRNGDL (99 aa). Polar residues predominate over residues 314–327; sequence RNSSLQEAGTSPLK. Residue serine 317 is modified to Phosphoserine. Threonine 329 carries the phosphothreonine modification. The segment covering 329-340 has biased composition (basic and acidic residues); it reads TPEKWRASDATK. Positions 345–361 are enriched in polar residues; it reads SDATANNVDSNQPQQRV. Positions 362-400 are enriched in low complexity; sequence TSNSSSCSSVSSLVTTATNSSASDTPTTSSSSTSTISAA. Serine 672 carries the phosphoserine modification. The interval 923-954 is disordered; that stretch reads VSTSGHASLPSRVGSPHHRRNEPQNSSFRSTI. The span at 945–954 shows a compositional bias: polar residues; it reads PQNSSFRSTI.

The protein belongs to the NIBP family. May be part of the multisubunit TRAPP (transport protein particle) complex.

It localises to the cytoplasm. The protein localises to the golgi apparatus. Its function is as follows. Cooperates with Rab11 and fwd/PI4K to mediate the flow of membrane through the Golgi, which is required to support cleavage furrow ingression, therefore promoting cytokinesis in male meiotic cells. This is Protein brunelleschi from Drosophila melanogaster (Fruit fly).